The following is a 466-amino-acid chain: Ribulose bisphosphate carboxylase large chain (466 aa).

Lys5 is modified (N6,N6,N6-trimethyllysine). Substrate is bound by residues Asn114 and Thr164. Lys166 functions as the Proton acceptor in the catalytic mechanism. A substrate-binding site is contributed by Lys168. The Mg(2+) site is built by Lys192, Asp194, and Glu195. Lys192 carries the post-translational modification N6-carboxylysine. His285 (proton acceptor) is an active-site residue. Substrate-binding residues include Arg286, His318, and Ser370.

The protein belongs to the RuBisCO large chain family. Type I subfamily. As to quaternary structure, heterohexadecamer of 8 large chains and 8 small chains; disulfide-linked. The disulfide link is formed within the large subunit homodimers. The cofactor is Mg(2+). In terms of processing, the disulfide bond which can form in the large chain dimeric partners within the hexadecamer appears to be associated with oxidative stress and protein turnover.

The protein resides in the plastid. It is found in the chloroplast. It catalyses the reaction 2 (2R)-3-phosphoglycerate + 2 H(+) = D-ribulose 1,5-bisphosphate + CO2 + H2O. It carries out the reaction D-ribulose 1,5-bisphosphate + O2 = 2-phosphoglycolate + (2R)-3-phosphoglycerate + 2 H(+). In terms of biological role, ruBisCO catalyzes two reactions: the carboxylation of D-ribulose 1,5-bisphosphate, the primary event in carbon dioxide fixation, as well as the oxidative fragmentation of the pentose substrate in the photorespiration process. Both reactions occur simultaneously and in competition at the same active site. The chain is Ribulose bisphosphate carboxylase large chain from Vitis aestivalis (Grape).